A 975-amino-acid chain; its full sequence is MEKMNWLSRLASRVPGHRVPQGASLQTPVMADPETCLMVFKNHWSQVVRILERQGPRAATGGADDLSAVRNHTYQMLTLLAEDRAVPSAPSGPGPLLEFALREDLLSRVLTWQLQWDEFGDGVEERRAEQLKLFEMLVSEARQPLLRHGPVREALLALLDACGRPVPSSPALDEGLVLLLSQLCVCVAREPSLLEFFLQPPPEPGAAPRLLLFSRLVPFVHREGTLGQQARDALLLLMALSDGSPTVGRYIADHSYFCPVLATGLSALYSSLPRKIEVPGDDWHCLRREDWIGVPALALFMSSLEFCNAVIQVAHPLVQKQLVDYIHNGFLVPVMGPALHKTSVEEMIASTAYLELFLRSISEPALLRTFLRFLLLHRHDTHTILDTLVARIGSNSRLCMVSLSLFRTLLNLSCEDVLLQLVLRYLVPCNHVMLSQKPAVRDVDLYGRAADKFLSLIPRCCRHHAPSPPRPEHASWARGPGSPSVDSSSVVTVPRPSTPSRLALFLRQQSLGGSESPGPVPRSPGLTASPTSSPSRRPSPAEEPGELEDNYLEYLREARRGVDRCVRACRTWSAPYDGERPPPEPNPLGSRTKKRSLLPEEDRDNVREGEEENLGSRGLAVGVGDTPGYLLPPQLNGVPGPWPEGAKKVRLVPRLVPQEGVRELLEGTSEDMAGLESFGQELQELEVALSNGGAGSEPPLEPPLPPEEEEAYESFTCPPEPPGPFLSSPLRTLHQLPSQPFTGPFMAVLFAKLENMLQNSVYVNFLLTGLVAQLACHPQPLLRSFLLNTNMVFQPSVKSLLQVLGSVKNKIESFAASQEDFPALLSKAKKYLIARGKLDWAEGPTAGPAPRRSDSLVRSRRPSLGELLLRHAHSPTRARQAVQVLQPGRDGTGLGLGGGSPGASTPVLLPRGGASERQGEALRVKNAVYCAVIFPEFLKELAAISQAHAVTSPFLLDTSEEVSLPPISGFGPLNP.

Residues 465-496 (APSPPRPEHASWARGPGSPSVDSSSVVTVPRP) are disordered. Ser-467 carries the post-translational modification Phosphoserine. Positions 482-496 (SPSVDSSSVVTVPRP) are enriched in low complexity. A phosphoserine mark is found at Ser-510, Ser-523, Ser-529, and Ser-533. 3 disordered regions span residues 511-548 (LGGS…GELE), 573-621 (SAPY…GLAV), and 690-717 (SNGG…SFTC). Positions 527–538 (TASPTSSPSRRP) are enriched in low complexity. Residues 597–608 (LLPEEDRDNVRE) are compositionally biased toward basic and acidic residues. Ser-863 bears the Phosphoserine mark. Thr-892 bears the Phosphothreonine mark. Ser-900 is modified (phosphoserine).

The protein belongs to the FHIP family. In terms of assembly, component of the FTS/Hook/FHIP complex (FHF complex), composed of AKTIP/FTS, FHIP1B, and one or more members of the Hook family of proteins HOOK1, HOOK2, and HOOK3. The FHF complex associates with the homotypic vesicular sorting complex (the HOPS complex).

In terms of biological role, component of the FTS/Hook/FHIP complex (FHF complex). The FHF complex may function to promote vesicle trafficking and/or fusion via the homotypic vesicular protein sorting complex (the HOPS complex). FHF complex promotes the distribution of AP-4 complex to the perinuclear area of the cell. The polypeptide is FHF complex subunit HOOK-interacting protein 1B (Mus musculus (Mouse)).